The following is a 566-amino-acid chain: Putative ABC transporter ATP-binding protein BT9727_2424 (566 aa).

ABC transporter domains are found at residues 5 to 246 (ISFE…GLRE) and 300 to 533 (LKVE…ANLK). ATP contacts are provided by residues 39 to 46 (GRSGSGKS) and 333 to 340 (GHNGAGKS).

It belongs to the ABC transporter superfamily.

It localises to the cell membrane. Its function is as follows. Probably part of an ABC transporter complex. Responsible for energy coupling to the transport system. The protein is Putative ABC transporter ATP-binding protein BT9727_2424 of Bacillus thuringiensis subsp. konkukian (strain 97-27).